The primary structure comprises 329 residues: D-alanine--D-alanine ligase (329 aa).

The 207-residue stretch at 120–326 (KLWLSAIGIP…FAHYLEQILR (207 aa)) folds into the ATP-grasp domain. An ATP-binding site is contributed by 150 to 205 (ALAKWGKVFIKAASQGSSVGCYSASNETDLLQGIKDAFGYSEQVLIEKAVKPRELE). Positions 280, 293, and 295 each coordinate Mg(2+).

This sequence belongs to the D-alanine--D-alanine ligase family. Mg(2+) serves as cofactor. Requires Mn(2+) as cofactor.

It is found in the cytoplasm. It catalyses the reaction 2 D-alanine + ATP = D-alanyl-D-alanine + ADP + phosphate + H(+). It participates in cell wall biogenesis; peptidoglycan biosynthesis. Cell wall formation. In Aeromonas salmonicida (strain A449), this protein is D-alanine--D-alanine ligase.